Consider the following 1357-residue polypeptide: Vascular endothelial growth factor receptor 2 (1357 aa).

Residues 1–22 form the signal peptide; that stretch reads MAKTSYALLLLDILLTFNVAKA. Over 23 to 774 the chain is Extracellular; it reads IELRFVPDPP…GAEEKMNVEL (752 aa). Ig-like C2-type domains lie at 32 to 120, 120 to 222, 216 to 330, 335 to 426, 433 to 553, 556 to 667, and 676 to 762; these read PTLN…SVAV, VYVF…VAVV, PYIV…ASLI, PFIA…RTFQ, PRIF…VIVF, TRFL…LLHN, and SRIV…ARIS. Residues Asn35, Asn44, Asn66, Asn97, Asn161, Asn209, Asn247, Asn272, Asn303, Asn307, Asn407, Asn501, Asn560, Asn621, Asn631, Asn640, Asn681, Asn688, and Asn713 are each glycosylated (N-linked (GlcNAc...) asparagine). Disulfide bonds link Cys53–Cys104 and Cys153–Cys203. Cys248 and Cys314 form a disulfide bridge. Cys457 and Cys538 form a disulfide bridge. A disulfide bridge links Cys579 with Cys651. Cys697 and Cys746 form a disulfide bridge. The helical transmembrane segment at 775–795 threads the bilayer; sequence IMPIGAVVIAMFLWLLIVFVI. Over 796-1357 the chain is Cytoplasmic; sequence RNRKRPNDGD…AEVRYSAPPV (562 aa). The Protein kinase domain maps to 843–1173; sequence LKLGEPLGRG…FTQLVEHLGN (331 aa). ATP-binding positions include 849–857 and Lys877; that span reads LGRGAFGQV. The interval 944-975 is disordered; the sequence is YSPYKKRTPRMPNRREVQQDEDPREGDLGLGT. Asp1039 acts as the Proton acceptor in catalysis. Phosphotyrosine; by autocatalysis occurs at positions 1065, 1070, 1186, and 1222. A disordered region spans residues 1296 to 1357; the sequence is SLASESSNQT…AEVRYSAPPV (62 aa). Over residues 1298-1312 the composition is skewed to polar residues; sequence ASESSNQTSGYQSGY.

The protein belongs to the protein kinase superfamily. Tyr protein kinase family. CSF-1/PDGF receptor subfamily. In terms of assembly, interacts with isoform VEGF165 of vegfaa and, to a lesser extent, with isoform VEGF171 of vegfab. Interacts (via juxtamembrane region) with chaperone pdcl3 (via thioredoxin fold region); the interaction leads to increased vegfr2 abundance through inhibition of its ubiquitination and degradation. In terms of tissue distribution, first expressed in embryos between 5- and 7-somites in the bilateral stripes that contain the developing angioblasts, and then localized to the intermediate cell mass (ICM) and the developing vasculature. By 30 hpf, expressed in the major trunk, head and intersomitic vessels, persisting through 4 dpf when expression is seen in developing subintestinal veins and in the remaining vasculature.

Its subcellular location is the cell membrane. It localises to the cytoplasm. The protein localises to the nucleus. It is found in the cytoplasmic vesicle. The protein resides in the early endosome. Its subcellular location is the cell junction. It localises to the endoplasmic reticulum. The enzyme catalyses L-tyrosyl-[protein] + ATP = O-phospho-L-tyrosyl-[protein] + ADP + H(+). Functionally, receptor for VEGF or VEGFC. Has a tyrosine-protein kinase activity. Combinations of multiple VEGF receptors are required for development of different blood vessel types in the embryo. Involved in angiogenesis, specifically in VEGF-induced sprouting of new blood vessels. Particularly involved in artery formation. Does not appear to be required for hematopoiesis. This is Vascular endothelial growth factor receptor 2 from Danio rerio (Zebrafish).